The chain runs to 172 residues: uncharacterized protein (172 aa).

An N-terminal signal peptide occupies residues 1–21 (MMKFKKCLLPVAMLASFTLAG). The N-palmitoyl cysteine moiety is linked to residue cysteine 22. Cysteine 22 is lipidated: S-diacylglycerol cysteine.

The protein resides in the cell membrane. This is an uncharacterized protein from Escherichia coli O157:H7.